A 238-amino-acid chain; its full sequence is Demethylmenaquinone methyltransferase (238 aa).

S-adenosyl-L-methionine-binding positions include Thr-65, Asp-85, and 109–110; that span reads DA.

This sequence belongs to the class I-like SAM-binding methyltransferase superfamily. MenG/UbiE family.

It carries out the reaction a 2-demethylmenaquinol + S-adenosyl-L-methionine = a menaquinol + S-adenosyl-L-homocysteine + H(+). It participates in quinol/quinone metabolism; menaquinone biosynthesis; menaquinol from 1,4-dihydroxy-2-naphthoate: step 2/2. Methyltransferase required for the conversion of demethylmenaquinol (DMKH2) to menaquinol (MKH2). This is Demethylmenaquinone methyltransferase from Roseiflexus sp. (strain RS-1).